A 152-amino-acid polypeptide reads, in one-letter code: MFRGATMVNLDSKGRLAVPTRYRDLLNEESQGQMVCTIDLHQPCLLLYTLPAWEVIEQKLSRLSSMNPAERRVQRLLLGHASECQMDGAGRLLIAGTLRQHAGLNKEVMLVGQFNKFELWDEQTWYQQVKDDIDAEQSTQEPLSERLQDLSL.

2 SpoVT-AbrB domains span residues 5–52 and 81–124; these read ATMV…TLPA and ASEC…DEQT.

This sequence belongs to the MraZ family. In terms of assembly, forms oligomers.

The protein localises to the cytoplasm. The protein resides in the nucleoid. Functionally, negatively regulates its own expression and that of the subsequent genes in the proximal part of the division and cell wall (dcw) gene cluster. Acts by binding directly to DNA. May also regulate the expression of genes outside the dcw cluster. The polypeptide is Transcriptional regulator MraZ (Yersinia enterocolitica serotype O:8 / biotype 1B (strain NCTC 13174 / 8081)).